A 124-amino-acid chain; its full sequence is MLFLTQVREVVVSEVNIPLSFSDAAATRVQTLIAEEENPDLKLRVYITGGGCSGFQYGFTFDEKVNDGDTTIVNSGVTLVVDPMSLQYLMGGMVDYTEGLEGARFFVNNPNATTTCGCGASFSV.

C52, C116, and C118 together coordinate iron-sulfur cluster.

This sequence belongs to the HesB/IscA family. As to quaternary structure, homodimer. Iron-sulfur cluster is required as a cofactor.

Functionally, required for insertion of 4Fe-4S clusters for at least IspG. This is Iron-sulfur cluster insertion protein ErpA from Vibrio atlanticus (strain LGP32) (Vibrio splendidus (strain Mel32)).